The following is a 128-amino-acid chain: SH2 domain-containing protein 1A (128 aa).

One can recognise an SH2 domain in the interval 6–102 (VYHGKISRET…GIVIPLQYPV (97 aa)). Positions 67–92 (DTAPGVHKRFFRKIKNLISAFQKPDQ) are interaction with FYN SH3 domain. Lys89 carries the post-translational modification N6-acetyllysine. The tract at residues 103-128 (EKKSSARSTQGATGRREDPDVFLKTP) is disordered. Basic and acidic residues predominate over residues 116-128 (GRREDPDVFLKTP).

As to quaternary structure, interacts with CD84, CD244, LY9, SLAMF1 and FYN. Interacts with NTRK1, NTRK2 and NTRK3.

Its subcellular location is the cytoplasm. Its function is as follows. Cytoplasmic adapter regulating receptors of the signaling lymphocytic activation molecule (SLAM) family such as SLAMF1, CD244, LY9, CD84, SLAMF6 and SLAMF7. In SLAM signaling seems to cooperate with SH2D1B/EAT-2. Initially it has been proposed that association with SLAMF1 prevents SLAMF1 binding to inhibitory effectors including INPP5D/SHIP1 and PTPN11/SHP-2. However, by simultaneous interactions, recruits FYN which subsequently phosphorylates and activates SLAMF1. Positively regulates CD244/2B4- and CD84-mediated natural killer (NK) cell functions. Can also promote CD48-, SLAMF6 -, LY9-, and SLAMF7-mediated NK cell activation. In the context of NK cell-mediated cytotoxicity enhances conjugate formation with target cells. May also regulate the activity of the neurotrophin receptors NTRK1, NTRK2 and NTRK3. The polypeptide is SH2 domain-containing protein 1A (SH2D1A) (Sus scrofa (Pig)).